The following is a 285-amino-acid chain: Large ribosomal subunit protein uL1m (285 aa).

The N-terminal 19 residues, 1–19 (MLSVVAIPKICVTGPARRC), are a transit peptide targeting the mitochondrion.

This sequence belongs to the universal ribosomal protein uL1 family. Component of the mitochondrial large ribosomal subunit (mt-LSU). Mature yeast 74S mitochondrial ribosomes consist of a small (37S) and a large (54S) subunit. The 37S small subunit contains a 15S ribosomal RNA (15S mt-rRNA) and 34 different proteins. The 54S large subunit contains a 21S rRNA (21S mt-rRNA) and 46 different proteins.

It localises to the mitochondrion. Functionally, component of the mitochondrial ribosome (mitoribosome), a dedicated translation machinery responsible for the synthesis of mitochondrial genome-encoded proteins, including at least some of the essential transmembrane subunits of the mitochondrial respiratory chain. The mitoribosomes are attached to the mitochondrial inner membrane and translation products are cotranslationally integrated into the membrane. In Saccharomyces cerevisiae (strain ATCC 204508 / S288c) (Baker's yeast), this protein is Large ribosomal subunit protein uL1m (MRPL1).